The following is a 448-amino-acid chain: Protein arginine N-methyltransferase 2 (448 aa).

Interaction with ESR1 regions lie at residues 1–289 (MEAP…SALK) and 145–287 (KESL…NLSA). An SH3 domain is found at 42 to 101 (LQPEEFVAIADYTATDETQLSFLRGEKILILRQTTADWWWGERAGCCGYIPANHLGKQLE). Arg-73 and Arg-84 each carry asymmetric dimethylarginine. An interaction with RB1 region spans residues 95–219 (HLGKQLEEYD…DVVLPEKVDV (125 aa)). The 304-residue stretch at 111–414 (DEEYFDSYGT…CCVTKKSGME (304 aa)) folds into the SAM-dependent MTase PRMT-type domain. Residues His-124, Arg-133, Gly-157, Glu-180, and Glu-209 each coordinate S-adenosyl-L-methionine. Residues Glu-223 and Glu-232 contribute to the active site.

Belongs to the class I-like SAM-binding methyltransferase superfamily. Protein arginine N-methyltransferase family. In terms of assembly, self-associates. Interacts with HNRNPUL1. Interacts with NFKBIA. Interacts with NCOA6 coactivator. Interacts (via SH3 domain) with PRMT8. Interacts with AR. Interacts with ESR1, ESR2, PGR, PPARG, RARA, RXRA and THRB. Interacts with RB1 and E2F1. Expressed in liver, pancreas, lung, brain, skeletal muscle, heart, muscle and fat.

It localises to the cytoplasm. Its subcellular location is the nucleus. It catalyses the reaction L-arginyl-[protein] + 2 S-adenosyl-L-methionine = N(omega),N(omega)-dimethyl-L-arginyl-[protein] + 2 S-adenosyl-L-homocysteine + 2 H(+). Functionally, arginine methyltransferase that methylates the guanidino nitrogens of arginyl residues in proteins such as STAT3, FBL, histone H4. May inhibit NF-kappa-B transcription, and promote apoptosis. Represses E2F1 transcriptional activity (in a RB1-dependent manner). Has a negative regulation effect on G1 to S transition of mitotic cell cycle. Involved in growth regulation. Acts as a coactivator (with NCOA2) of the androgen receptor (AR)-mediated transactivation. Acts as a coactivator (with estrogen) of estrogen receptor (ER)-mediated transactivation. Enhances PGR, PPARG, RARA-mediated transactivation. In Mus musculus (Mouse), this protein is Protein arginine N-methyltransferase 2 (Prmt2).